Here is a 146-residue protein sequence, read N- to C-terminus: Leptin (146 aa).

A disulfide bond links cysteine 96 and cysteine 146.

It belongs to the leptin family.

The protein localises to the secreted. Key player in the regulation of energy balance and body weight control. Once released into the circulation, has central and peripheral effects by binding LEPR, found in many tissues, which results in the activation of several major signaling pathways. In the hypothalamus, acts as an appetite-regulating factor that induces a decrease in food intake and an increase in energy consumption by inducing anorexinogenic factors and suppressing orexigenic neuropeptides, also regulates bone mass and secretion of hypothalamo-pituitary-adrenal hormones. In the periphery, increases basal metabolism, influences reproductive function, regulates pancreatic beta-cell function and insulin secretion, is pro-angiogenic for endothelial cell and affects innate and adaptive immunity. In the arcuate nucleus of the hypothalamus, activates by depolarization POMC neurons inducing FOS and SOCS3 expression to release anorexigenic peptides and inhibits by hyperpolarization NPY neurons inducing SOCS3 with a consequent reduction on release of orexigenic peptides. In addition to its known satiety inducing effect, has a modulatory role in nutrient absorption. In the intestine, reduces glucose absorption by enterocytes by activating PKC and leading to a sequential activation of p38, PI3K and ERK signaling pathways which exerts an inhibitory effect on glucose absorption. Acts as a growth factor on certain tissues, through the activation of different signaling pathways increases expression of genes involved in cell cycle regulation such as CCND1, via JAK2-STAT3 pathway, or VEGFA, via MAPK1/3 and PI3K-AKT1 pathways. May also play an apoptotic role via JAK2-STAT3 pathway and up-regulation of BIRC5 expression. Pro-angiogenic, has mitogenic activity on vascular endothelial cells and plays a role in matrix remodeling by regulating the expression of matrix metalloproteinases (MMPs) and tissue inhibitors of metalloproteinases (TIMPs). In innate immunity, modulates the activity and function of neutrophils by increasing chemotaxis and the secretion of oxygen radicals. Increases phagocytosis by macrophages and enhances secretion of pro-inflammatory mediators. Increases cytotoxic ability of NK cells. Plays a pro-inflammatory role, in synergy with IL1B, by inducing NOS2 which promotes the production of IL6, IL8 and Prostaglandin E2, through a signaling pathway that involves JAK2, PI3K, MAP2K1/MEK1 and MAPK14/p38. In adaptive immunity, promotes the switch of memory T-cells towards T helper-1 cell immune responses. Increases CD4(+)CD25(-) T-cell proliferation and reduces autophagy during TCR (T-cell receptor) stimulation, through MTOR signaling pathway activation and BCL2 up-regulation. In Pongo pygmaeus (Bornean orangutan), this protein is Leptin (LEP).